We begin with the raw amino-acid sequence, 686 residues long: Gamma-aminobutyric acid receptor alpha-like (686 aa).

The first 58 residues, 1–58 (MCTMPATRDASGSGDASTDLIAARSLSSHQGQRSNLRIFKLLISCCLLMLCIYPNAWP), serve as a signal peptide directing secretion. Over 97–393 (SSWLTQSNNH…NFHLQRHMGN (297 aa)) the chain is Extracellular. Asn108 is a glycosylation site (N-linked (GlcNAc...) asparagine). A disulfide bond links Cys233 and Cys247. The N-linked (GlcNAc...) asparagine glycan is linked to Asn292. The next 3 membrane-spanning stretches (helical) occupy residues 394 to 414 (FLIQ…VSFW), 424 to 441 (VSLG…GLEA), and 456 to 476 (FFVF…AVVH). The Cytoplasmic segment spans residues 477 to 650 (YYTKYGSGEC…YNSVSKIDRA (174 aa)). Residues 570–641 (KPPRADSDED…RRKGKRTPQY (72 aa)) form a disordered region. Positions 586-596 (QLRANEAPTTS) are enriched in polar residues. The span at 597-609 (AAAAAAQAAAQAA) shows a compositional bias: low complexity. The chain crosses the membrane as a helical span at residues 651 to 671 (SRIVFPLLFILINVFYWYGYL).

This sequence belongs to the ligand-gated ion channel (TC 1.A.9) family. Gamma-aminobutyric acid receptor (TC 1.A.9.5) subfamily. In terms of assembly, generally pentameric. There are five types of GABA(A) receptor chains: alpha, beta, gamma, delta, and rho. Interacts with Lcch3 (beta chain).

The protein localises to the postsynaptic cell membrane. Its subcellular location is the cell membrane. Functionally, GABA, an inhibitory neurotransmitter, mediates neuronal inhibition by binding to the GABA receptor and opening an integral chloride channel. May combine with the ligand-gated ion channel subunit Lcch3 to form cation-selective GABA-gated ion channels. This is Gamma-aminobutyric acid receptor alpha-like (Grd) from Drosophila melanogaster (Fruit fly).